The sequence spans 310 residues: MFQHTTVLLKEAVDGLNVRPDGVYVDCTLGGGGHSEYLLSRLSKRGKLFAFDQDETAILHASERLARYREQVQFINRNFRFLQEELSALGIHAVDGILFDLGVSSPQLDEPERGFSYQHDAPLDMRMDRKQRLTAAEIVNRWPYEELVRIFFRYGEEKFSKQVARKIEEVRRKRPIETTGELVEVIKAAIPAPARRSGGHPAKRIFQALRIAVNDELEAFREALEQAIELLAPGGRVSVITFHSLEDRICKETFKKASESPPLPPGLPVLPDDYRPVLKIITKKPVVPSAEELERNNRARSAKLRIAEKQ.

Residues 32–34 (GGH), D52, F79, D100, and Q107 each bind S-adenosyl-L-methionine.

The protein belongs to the methyltransferase superfamily. RsmH family.

It localises to the cytoplasm. The enzyme catalyses cytidine(1402) in 16S rRNA + S-adenosyl-L-methionine = N(4)-methylcytidine(1402) in 16S rRNA + S-adenosyl-L-homocysteine + H(+). In terms of biological role, specifically methylates the N4 position of cytidine in position 1402 (C1402) of 16S rRNA. This is Ribosomal RNA small subunit methyltransferase H from Geobacillus thermodenitrificans (strain NG80-2).